The sequence spans 869 residues: Translation initiation factor IF-2 (869 aa).

2 disordered regions span residues 51–78 (KQHG…NMGK) and 105–277 (EEET…SDLK). The segment covering 67 to 76 (QRKTTSTLNM) has biased composition (polar residues). The span at 110–119 (RALAEQQAQL) shows a compositional bias: low complexity. Basic and acidic residues predominate over residues 120–241 (EAEKAAAEEA…KKQEAEEVHV (122 aa)). Residues 369–542 (SRAPVVTIMG…ELLDLKAPPT (174 aa)) form the tr-type G domain. The G1 stretch occupies residues 378–385 (GHVDHGKT). GTP is bound at residue 378–385 (GHVDHGKT). A G2 region spans residues 403-407 (GITQH). Positions 424–427 (DTPG) are G3. Residues 424–428 (DTPGH) and 478–481 (NKMD) each bind GTP. Residues 478–481 (NKMD) form a G4 region. Residues 514 to 516 (SAK) form a G5 region.

It belongs to the TRAFAC class translation factor GTPase superfamily. Classic translation factor GTPase family. IF-2 subfamily.

It localises to the cytoplasm. Its function is as follows. One of the essential components for the initiation of protein synthesis. Protects formylmethionyl-tRNA from spontaneous hydrolysis and promotes its binding to the 30S ribosomal subunits. Also involved in the hydrolysis of GTP during the formation of the 70S ribosomal complex. The chain is Translation initiation factor IF-2 from Pseudoalteromonas atlantica (strain T6c / ATCC BAA-1087).